A 231-amino-acid polypeptide reads, in one-letter code: Trypsin-2 (231 aa).

The signal sequence occupies residues 1-4; that stretch reads AAFA. A propeptide spans 5–9 (activation peptide); it reads TEDDK. The Peptidase S1 domain occupies 10-229; it reads IVGGYECKAY…FNDWLTSTMA (220 aa). Cystine bridges form between Cys16/Cys145, Cys34/Cys50, Cys118/Cys218, Cys125/Cys191, Cys156/Cys170, and Cys181/Cys205. The active-site Charge relay system is His49. Glu61, Asn63, Val66, and Glu71 together coordinate Ca(2+). The active-site Charge relay system is the Asp93. Ser185 serves as the catalytic Charge relay system.

The protein belongs to the peptidase S1 family. Requires Ca(2+) as cofactor.

Its subcellular location is the secreted. It is found in the extracellular space. The enzyme catalyses Preferential cleavage: Arg-|-Xaa, Lys-|-Xaa.. The sequence is that of Trypsin-2 from Salmo salar (Atlantic salmon).